The sequence spans 436 residues: 3-ketoacyl-CoA thiolase (436 aa).

Residue cysteine 99 is the Acyl-thioester intermediate of the active site. Residues histidine 392 and cysteine 422 each act as proton acceptor in the active site.

It belongs to the thiolase-like superfamily. Thiolase family. Heterotetramer of two alpha chains (FadJ) and two beta chains (FadI).

The protein localises to the cytoplasm. The enzyme catalyses an acyl-CoA + acetyl-CoA = a 3-oxoacyl-CoA + CoA. Its pathway is lipid metabolism; fatty acid beta-oxidation. Its function is as follows. Catalyzes the final step of fatty acid oxidation in which acetyl-CoA is released and the CoA ester of a fatty acid two carbons shorter is formed. This is 3-ketoacyl-CoA thiolase from Escherichia coli (strain K12 / MC4100 / BW2952).